Reading from the N-terminus, the 239-residue chain is Mediator of RNA polymerase II transcription subunit 7 (239 aa).

2 disordered regions span residues 1–21 (MSSL…PPPP) and 43–66 (LFVN…DMSV). Residues 46-66 (NDEKGKTKGKEKKSDDRDMSV) are compositionally biased toward basic and acidic residues.

The protein belongs to the Mediator complex subunit 7 family. Component of the Mediator complex.

The protein localises to the nucleus. In terms of biological role, component of the Mediator complex, a coactivator involved in the regulated transcription of nearly all RNA polymerase II-dependent genes. Mediator functions as a bridge to convey information from gene-specific regulatory proteins to the basal RNA polymerase II transcription machinery. Mediator is recruited to promoters by direct interactions with regulatory proteins and serves as a scaffold for the assembly of a functional preinitiation complex with RNA polymerase II and the general transcription factors. This chain is Mediator of RNA polymerase II transcription subunit 7 (MED7), found in Cryptococcus neoformans var. neoformans serotype D (strain B-3501A) (Filobasidiella neoformans).